Reading from the N-terminus, the 80-residue chain is U-scoloptoxin(15)-Er1a (80 aa).

A signal peptide spans 1-22; the sequence is MQNKGVVLTLFLVVSMAIVISS.

This sequence belongs to the scoloptoxin-15 family. In terms of processing, contains 2 disulfide bonds. Expressed by the venom gland.

The protein resides in the secreted. The chain is U-scoloptoxin(15)-Er1a from Ethmostigmus rubripes (Giant centipede).